The following is a 229-amino-acid chain: MARPAKPAEEPQVEALCCELGFRLPPAAVTGLTVYLNMLQKWSAVMNLVGPRTWQPMVRTLIVDSLHLDRFLRDAVPQCGPQIWDFGAGAGLPGIPLRMVWQHGEYHMVDVREKRTMFMQMVLARHPLSGTFVHRARVEDFMADRAPADMLVSRAFMPWPELLSLLEGRIRQGGHVIVLANEPAPDHDRPDAAHGRPLPSGWDLTAQYVYEVEGSARYFWALSSKKAPS.

Residues Gly87, Leu92, 138–139, and Arg154 contribute to the S-adenosyl-L-methionine site; that span reads VE.

It belongs to the methyltransferase superfamily. RNA methyltransferase RsmG family.

It localises to the cytoplasm. It catalyses the reaction guanosine(527) in 16S rRNA + S-adenosyl-L-methionine = N(7)-methylguanosine(527) in 16S rRNA + S-adenosyl-L-homocysteine. In terms of biological role, specifically methylates the N7 position of guanine in position 527 of 16S rRNA. The polypeptide is Ribosomal RNA small subunit methyltransferase G (Oleidesulfovibrio alaskensis (strain ATCC BAA-1058 / DSM 17464 / G20) (Desulfovibrio alaskensis)).